Reading from the N-terminus, the 332-residue chain is Glyceraldehyde-3-phosphate dehydrogenase (332 aa).

NAD(+) is bound by residues 11–12, Asp-34, Arg-78, and Ser-120; that span reads RI. Residues 151–153, Thr-182, Arg-197, 210–211, and Arg-233 each bind D-glyceraldehyde 3-phosphate; these read SCT and TG. The active-site Nucleophile is the Cys-152. Asn-314 is a binding site for NAD(+).

The protein belongs to the glyceraldehyde-3-phosphate dehydrogenase family. As to quaternary structure, homotetramer.

The protein localises to the cytoplasm. It catalyses the reaction D-glyceraldehyde 3-phosphate + phosphate + NAD(+) = (2R)-3-phospho-glyceroyl phosphate + NADH + H(+). Its pathway is carbohydrate degradation; glycolysis; pyruvate from D-glyceraldehyde 3-phosphate: step 1/5. Its function is as follows. Catalyzes the oxidative phosphorylation of glyceraldehyde 3-phosphate (G3P) to 1,3-bisphosphoglycerate (BPG) using the cofactor NAD. The first reaction step involves the formation of a hemiacetal intermediate between G3P and a cysteine residue, and this hemiacetal intermediate is then oxidized to a thioester, with concomitant reduction of NAD to NADH. The reduced NADH is then exchanged with the second NAD, and the thioester is attacked by a nucleophilic inorganic phosphate to produce BPG. The protein is Glyceraldehyde-3-phosphate dehydrogenase (gap) of Kitasatospora aureofaciens (Streptomyces aureofaciens).